A 226-amino-acid polypeptide reads, in one-letter code: PKHD-type hydroxylase Abu_0724 (226 aa).

The Fe2OG dioxygenase domain maps to 78-178 (HIISPFFNKY…RMVSFMWIQS (101 aa)). Fe cation is bound by residues His-96, Asp-98, and His-159. Arg-169 provides a ligand contact to 2-oxoglutarate.

Fe(2+) is required as a cofactor. L-ascorbate serves as cofactor.

This Aliarcobacter butzleri (strain RM4018) (Arcobacter butzleri) protein is PKHD-type hydroxylase Abu_0724.